Consider the following 220-residue polypeptide: UPF0319 protein YccT (220 aa).

The first 20 residues, Met1–Ala20, serve as a signal peptide directing secretion.

Belongs to the UPF0319 family.

The sequence is that of UPF0319 protein YccT from Salmonella dublin (strain CT_02021853).